A 404-amino-acid chain; its full sequence is Tryptophan synthase beta chain (404 aa).

Lys-99 bears the N6-(pyridoxal phosphate)lysine mark.

It belongs to the TrpB family. Tetramer of two alpha and two beta chains. Pyridoxal 5'-phosphate serves as cofactor.

It carries out the reaction (1S,2R)-1-C-(indol-3-yl)glycerol 3-phosphate + L-serine = D-glyceraldehyde 3-phosphate + L-tryptophan + H2O. It participates in amino-acid biosynthesis; L-tryptophan biosynthesis; L-tryptophan from chorismate: step 5/5. The beta subunit is responsible for the synthesis of L-tryptophan from indole and L-serine. In Rhizobium rhizogenes (strain K84 / ATCC BAA-868) (Agrobacterium radiobacter), this protein is Tryptophan synthase beta chain.